The following is a 462-amino-acid chain: Arginine biosynthesis bifunctional protein ArgJ, mitochondrial (462 aa).

T200, K228, T239, E326, N457, and T462 together coordinate substrate. The active-site Nucleophile is T239.

It belongs to the ArgJ family. As to quaternary structure, heterodimer of an alpha and a beta chain. The alpha and beta chains are autoproteolytically processed from a single precursor protein within the mitochondrion.

The protein resides in the mitochondrion matrix. The catalysed reaction is N(2)-acetyl-L-ornithine + L-glutamate = N-acetyl-L-glutamate + L-ornithine. It catalyses the reaction L-glutamate + acetyl-CoA = N-acetyl-L-glutamate + CoA + H(+). Its pathway is amino-acid biosynthesis; L-arginine biosynthesis; L-ornithine and N-acetyl-L-glutamate from L-glutamate and N(2)-acetyl-L-ornithine (cyclic): step 1/1. It participates in amino-acid biosynthesis; L-arginine biosynthesis; N(2)-acetyl-L-ornithine from L-glutamate: step 1/4. Its function is as follows. Catalyzes two activities which are involved in the cyclic version of arginine biosynthesis: the synthesis of acetylglutamate from glutamate and acetyl-CoA, and of ornithine by transacetylation between acetylornithine and glutamate. This is Arginine biosynthesis bifunctional protein ArgJ, mitochondrial from Pyrenophora tritici-repentis (strain Pt-1C-BFP) (Wheat tan spot fungus).